The primary structure comprises 355 residues: MNELKNDRYLRALLRQPVDVTPVWMMRQAGRYLPEYKATRAIAGDFMSLCKNAELACEVTMQPLRRYPLDAAILFSDILTIPDAMGLGLYFETGEGPRFQSPITCRADVEKLPIPDPEQELGYVMNAVRTIRRELAGAVPLIGFSGSPWTLATYMVEGGSSKAFTKLKKMMYAEPQTLHLLLDKLADSVILYLNAQIKAGAQSVMVFDTWGGVLTGRDYAEFSLNYMHKIVDGLIRENDGRRVPVTLFTKGGGQWLEAMAATGCDALGLDWTTDIADARRRVGDKVALQGNMDPSILYAPAARIEEEVSTILAGFGQGEGHVFNLGHGIHQDVPPEHAGAFVKAVHALSKPYHQK.

Substrate-binding positions include Arg-27 to Arg-31, Asp-77, Tyr-154, Thr-209, and His-327.

It belongs to the uroporphyrinogen decarboxylase family. In terms of assembly, homodimer.

Its subcellular location is the cytoplasm. The catalysed reaction is uroporphyrinogen III + 4 H(+) = coproporphyrinogen III + 4 CO2. Its pathway is porphyrin-containing compound metabolism; protoporphyrin-IX biosynthesis; coproporphyrinogen-III from 5-aminolevulinate: step 4/4. Catalyzes the decarboxylation of four acetate groups of uroporphyrinogen-III to yield coproporphyrinogen-III. The protein is Uroporphyrinogen decarboxylase of Yersinia enterocolitica serotype O:8 / biotype 1B (strain NCTC 13174 / 8081).